A 161-amino-acid chain; its full sequence is Regulator of ribonuclease activity A (161 aa).

It belongs to the RraA family. In terms of assembly, homotrimer. Binds to both RNA-binding sites in the C-terminal region of Rne and to RhlB.

The protein localises to the cytoplasm. Functionally, globally modulates RNA abundance by binding to RNase E (Rne) and regulating its endonucleolytic activity. Can modulate Rne action in a substrate-dependent manner by altering the composition of the degradosome. Modulates RNA-binding and helicase activities of the degradosome. In Sodalis glossinidius (strain morsitans), this protein is Regulator of ribonuclease activity A.